Reading from the N-terminus, the 1068-residue chain is DNA-directed RNA polymerase subunit beta (1068 aa).

The protein belongs to the RNA polymerase beta chain family. In terms of assembly, in plastids the minimal PEP RNA polymerase catalytic core is composed of four subunits: alpha, beta, beta', and beta''. When a (nuclear-encoded) sigma factor is associated with the core the holoenzyme is formed, which can initiate transcription.

The protein localises to the plastid. Its subcellular location is the chloroplast. It catalyses the reaction RNA(n) + a ribonucleoside 5'-triphosphate = RNA(n+1) + diphosphate. Functionally, DNA-dependent RNA polymerase catalyzes the transcription of DNA into RNA using the four ribonucleoside triphosphates as substrates. The polypeptide is DNA-directed RNA polymerase subunit beta (Staurastrum punctulatum (Green alga)).